Here is a 289-residue protein sequence, read N- to C-terminus: Polyamine aminopropyltransferase (289 aa).

In terms of domain architecture, PABS spans proline 5–leucine 245. Glutamine 36 provides a ligand contact to S-methyl-5'-thioadenosine. 2 residues coordinate spermidine: histidine 67 and glutamate 91. Residues aspartate 111 and aspartate 143–glycine 144 contribute to the S-methyl-5'-thioadenosine site. The active-site Proton acceptor is the aspartate 164.

This sequence belongs to the spermidine/spermine synthase family. As to quaternary structure, homodimer or homotetramer.

The protein localises to the cytoplasm. The catalysed reaction is S-adenosyl 3-(methylsulfanyl)propylamine + putrescine = S-methyl-5'-thioadenosine + spermidine + H(+). It participates in amine and polyamine biosynthesis; spermidine biosynthesis; spermidine from putrescine: step 1/1. Catalyzes the irreversible transfer of a propylamine group from the amino donor S-adenosylmethioninamine (decarboxy-AdoMet) to putrescine (1,4-diaminobutane) to yield spermidine. This is Polyamine aminopropyltransferase from Pyrobaculum arsenaticum (strain DSM 13514 / JCM 11321 / PZ6).